A 129-amino-acid chain; its full sequence is Ig lambda-1 chain V region S43 (129 aa).

The first 19 residues, 1–19 (MAWISLILSLLALSSGAIS), serve as a signal peptide directing secretion. Gln-20 carries the pyrrolidone carboxylic acid modification. The 106-residue stretch at 20 to 125 (QAVVTQESAL…HWVFGGGTKL (106 aa)) folds into the Ig-like domain.

This chain is Ig lambda-1 chain V region S43, found in Mus musculus (Mouse).